The following is a 209-amino-acid chain: ATP-dependent Clp protease proteolytic subunit 1 (209 aa).

The active-site Nucleophile is Ser-109. The active site involves His-134.

Belongs to the peptidase S14 family. In terms of assembly, fourteen ClpP subunits assemble into 2 heptameric rings which stack back to back to give a disk-like structure with a central cavity, resembling the structure of eukaryotic proteasomes.

The protein localises to the cytoplasm. The catalysed reaction is Hydrolysis of proteins to small peptides in the presence of ATP and magnesium. alpha-casein is the usual test substrate. In the absence of ATP, only oligopeptides shorter than five residues are hydrolyzed (such as succinyl-Leu-Tyr-|-NHMec, and Leu-Tyr-Leu-|-Tyr-Trp, in which cleavage of the -Tyr-|-Leu- and -Tyr-|-Trp bonds also occurs).. Cleaves peptides in various proteins in a process that requires ATP hydrolysis. Has a chymotrypsin-like activity. Plays a major role in the degradation of misfolded proteins. The protein is ATP-dependent Clp protease proteolytic subunit 1 of Corynebacterium diphtheriae (strain ATCC 700971 / NCTC 13129 / Biotype gravis).